The sequence spans 438 residues: NADH-quinone oxidoreductase subunit D (438 aa).

This sequence belongs to the complex I 49 kDa subunit family. NDH-1 is composed of 14 different subunits. Subunits NuoB, C, D, E, F, and G constitute the peripheral sector of the complex.

Its subcellular location is the cell membrane. The enzyme catalyses a quinone + NADH + 5 H(+)(in) = a quinol + NAD(+) + 4 H(+)(out). Its function is as follows. NDH-1 shuttles electrons from NADH, via FMN and iron-sulfur (Fe-S) centers, to quinones in the respiratory chain. The immediate electron acceptor for the enzyme in this species is believed to be a menaquinone. Couples the redox reaction to proton translocation (for every two electrons transferred, four hydrogen ions are translocated across the cytoplasmic membrane), and thus conserves the redox energy in a proton gradient. The sequence is that of NADH-quinone oxidoreductase subunit D from Rhodococcus jostii (strain RHA1).